The chain runs to 175 residues: Ribulose bisphosphate carboxylase small subunit, chloroplastic (175 aa).

Residues 1–46 (MAPTVMASSATSVAPFQGLKSTAGLPVSRRSNGASLGSVSNGGRIR) constitute a chloroplast transit peptide.

This sequence belongs to the RuBisCO small chain family. Heterohexadecamer of 8 large and 8 small subunits.

Its subcellular location is the plastid. It localises to the chloroplast. Its function is as follows. RuBisCO catalyzes two reactions: the carboxylation of D-ribulose 1,5-bisphosphate, the primary event in carbon dioxide fixation, as well as the oxidative fragmentation of the pentose substrate. Both reactions occur simultaneously and in competition at the same active site. Although the small subunit is not catalytic it is essential for maximal activity. This is Ribulose bisphosphate carboxylase small subunit, chloroplastic from Aegilops tauschii (Tausch's goatgrass).